Here is a 323-residue protein sequence, read N- to C-terminus: Glyoxylate/hydroxypyruvate reductase B (323 aa).

Residues 37 to 62 (AEHGGAGARRRHDRLQQHGGSSAAGE) form a disordered region. Catalysis depends on residues R236 and E265. Residue H284 is the Proton donor of the active site.

Belongs to the D-isomer specific 2-hydroxyacid dehydrogenase family. GhrB subfamily. As to quaternary structure, homodimer.

It localises to the cytoplasm. It catalyses the reaction glycolate + NADP(+) = glyoxylate + NADPH + H(+). The enzyme catalyses (R)-glycerate + NAD(+) = 3-hydroxypyruvate + NADH + H(+). It carries out the reaction (R)-glycerate + NADP(+) = 3-hydroxypyruvate + NADPH + H(+). Functionally, catalyzes the NADPH-dependent reduction of glyoxylate and hydroxypyruvate into glycolate and glycerate, respectively. In Enterobacter agglomerans (Erwinia herbicola), this protein is Glyoxylate/hydroxypyruvate reductase B (tkrA).